Consider the following 258-residue polypeptide: L-aminoadipate-semialdehyde dehydrogenase-phosphopantetheinyl transferase (258 aa).

It belongs to the P-Pant transferase superfamily. AcpS family.

It catalyses the reaction apo-[ACP] + CoA = holo-[ACP] + adenosine 3',5'-bisphosphate + H(+). Its function is as follows. Catalyzes the transfer of a 4'-phosphopantetheine moiety from coenzyme A to a serine residue of acceptor proteins, such as alpha-aminoadipate reductase. Necessary for alpha-aminoadipate reductase activity. The protein is L-aminoadipate-semialdehyde dehydrogenase-phosphopantetheinyl transferase (LYS5) of Candida glabrata (strain ATCC 2001 / BCRC 20586 / JCM 3761 / NBRC 0622 / NRRL Y-65 / CBS 138) (Yeast).